Reading from the N-terminus, the 350-residue chain is Probable lactoylglutathione lyase, chloroplastic (350 aa).

The N-terminal 61 residues, 1–61 (MVRIIPMAAS…KLLRRSVNCL (61 aa)), are a transit peptide targeting the chloroplast. VOC domains follow at residues 88–212 (RMLH…LLER) and 218–342 (PLCQ…FVDN). H91 lines the Zn(2+) pocket. R95 serves as a coordination point for substrate. Zn(2+) is bound at residue E142. Substrate is bound by residues N146 and H160. 2 residues coordinate Zn(2+): H160 and E208. Catalysis depends on E208, which acts as the Proton donor/acceptor.

The protein belongs to the glyoxalase I family. The cofactor is Zn(2+).

It is found in the plastid. It localises to the chloroplast stroma. The catalysed reaction is (R)-S-lactoylglutathione = methylglyoxal + glutathione. The protein operates within secondary metabolite metabolism; methylglyoxal degradation; (R)-lactate from methylglyoxal: step 1/2. Its function is as follows. Catalyzes the conversion of hemimercaptal, formed from methylglyoxal and glutathione, to S-lactoylglutathione. The sequence is that of Probable lactoylglutathione lyase, chloroplastic from Arabidopsis thaliana (Mouse-ear cress).